The primary structure comprises 624 residues: Chaperone protein HtpG (624 aa).

The tract at residues 1 to 336 (MKGQETRGFQ…SSDLPLNVSR (336 aa)) is a; substrate-binding. The tract at residues 337–552 (EILQDSTVTR…ADEMSTQMAK (216 aa)) is b. Positions 553–624 (LFAAAGQKVP…IRRMNQLLVS (72 aa)) are c.

The protein belongs to the heat shock protein 90 family. As to quaternary structure, homodimer.

Its subcellular location is the cytoplasm. In terms of biological role, molecular chaperone. Has ATPase activity. The protein is Chaperone protein HtpG of Shigella flexneri.